The chain runs to 307 residues: uncharacterized protein (307 aa).

The chain crosses the membrane as a helical span at residues 12–34 (LLAFLLALIMIGSVFAYMLSGGS).

The protein localises to the membrane. This is an uncharacterized protein from Archaeoglobus fulgidus (strain ATCC 49558 / DSM 4304 / JCM 9628 / NBRC 100126 / VC-16).